A 324-amino-acid chain; its full sequence is Glyoxylate/hydroxypyruvate reductase B (324 aa).

Catalysis depends on residues arginine 237 and glutamate 266. Histidine 285 functions as the Proton donor in the catalytic mechanism.

It belongs to the D-isomer specific 2-hydroxyacid dehydrogenase family. GhrB subfamily. As to quaternary structure, homodimer.

It localises to the cytoplasm. The enzyme catalyses glycolate + NADP(+) = glyoxylate + NADPH + H(+). The catalysed reaction is (R)-glycerate + NAD(+) = 3-hydroxypyruvate + NADH + H(+). It carries out the reaction (R)-glycerate + NADP(+) = 3-hydroxypyruvate + NADPH + H(+). Its function is as follows. Catalyzes the NADPH-dependent reduction of glyoxylate and hydroxypyruvate into glycolate and glycerate, respectively. This is Glyoxylate/hydroxypyruvate reductase B from Escherichia coli (strain K12 / MC4100 / BW2952).